The primary structure comprises 144 residues: MKPRHKRALIIIAALIAIGVAALLILNALNSNIALYVTPSEVAAGKAPQGQAFRIGGMVKDGSLKRDGLTVHFVITDLAKDIPVAYIGILPDLFKEGKGAVIQGRMNANGEFIASEVLAKHDENYMPPEAKHALDQAQKNGSAK.

The Cytoplasmic portion of the chain corresponds to M1–R7. A helical; Signal-anchor for type II membrane protein membrane pass occupies residues A8–A28. Residues L29–K144 are Periplasmic-facing. Heme-binding residues include H121 and Y125.

It belongs to the CcmE/CycJ family.

The protein localises to the cell inner membrane. Its function is as follows. Heme chaperone required for the biogenesis of c-type cytochromes. Transiently binds heme delivered by CcmC and transfers the heme to apo-cytochromes in a process facilitated by CcmF and CcmH. This Polynucleobacter necessarius subsp. necessarius (strain STIR1) protein is Cytochrome c-type biogenesis protein CcmE.